The chain runs to 5154 residues: Hydrocephalus-inducing protein (5154 aa).

An interaction with KIF9 region spans residues 409–800; it reads MILEDSVLDP…VLLSSPSPCG (392 aa). The segment covering 997–1009 has biased composition (basic and acidic residues); the sequence is RPKEKQSKKEPGK. Disordered stretches follow at residues 997–1033, 1966–1988, 2193–2222, 2383–2423, 2521–2572, and 2706–2762; these read RPKEKQSKKEPGKKGSTSSSRRQSKASQEPTDNGNPV, ENEEEEMNTSDQGTTSTKRTSIS, ADSHFTGSQKQHHQHQSETPQVQISSSPLL, KLQQ…QGAT, HTGT…KAER, and KAQE…DIDQ. A compositionally biased stretch (low complexity) spans 1010–1024; that stretch reads KGSTSSSRRQSKASQ. A coiled-coil region spans residues 1948–1977; that stretch reads EMKKSKEEHMKAKYMENLENEEEEMNTSDQ. Composition is skewed to polar residues over residues 1974–1988 and 2209–2220; these read TSDQGTTSTKRTSIS and SETPQVQISSSP. The stretch at 2308-2444 forms a coiled coil; the sequence is YVVMKAQEKA…LKMESIERKV (137 aa). Composition is skewed to basic and acidic residues over residues 2383–2398, 2523–2535, 2548–2572, and 2721–2734; these read KLQQELERQKEEDELK, GTDEMSHEADDQR, KDRERERLEKERAEKERLEREKAER, and KLKDKPEQVRETQK. Residues 2543 to 2588 adopt a coiled-coil conformation; sequence GRKGRKDRERERLEKERAEKERLEREKAERERLEKLKALEERSDVE.

As to quaternary structure, interacts with KIF9. Expressed in brain and testis. Expressed in ciliated epithelial cells lining bronchi and oviduct, and in spermatocytes.

Its subcellular location is the cell projection. The protein resides in the cilium. It is found in the cytoplasm. The protein localises to the cytoskeleton. It localises to the cilium axoneme. Its subcellular location is the flagellum. In terms of biological role, required for ciliary motility. This Mus musculus (Mouse) protein is Hydrocephalus-inducing protein (Hydin).